A 983-amino-acid polypeptide reads, in one-letter code: Inner tegument protein (983 aa).

Positions 474–983 (LNVNTHFAVQ…TSVSLPPASP (510 aa)) are interaction with large tegument protein. The segment at 902-932 (PWESAPQPPRLRMTPDTDHEESTAGATSVPE) is disordered. Residues 914 to 923 (MTPDTDHEES) are compositionally biased toward basic and acidic residues.

It belongs to the herpesviridae inner tegument protein family. Interacts (via C-terminus) with the large tegument protein/LTP (via N-terminus).

Its subcellular location is the virion tegument. The protein localises to the host cytoplasm. It localises to the host nucleus. It is found in the host Golgi apparatus. The protein resides in the host trans-Golgi network. Plays an essential role in cytoplasmic secondary envelopment during viral egress. Interacts with the capsid via the large tegument protein/LTP and participates in its transport to the host trans-Golgi network (TGN) where secondary envelopment occurs. Modulates tegumentation and capsid accumulation at the viral assembly complex. This Homo sapiens (Human) protein is Inner tegument protein (UL47).